Reading from the N-terminus, the 598-residue chain is Elongation factor 4 (598 aa).

One can recognise a tr-type G domain in the interval lysine 2–glutamate 184. GTP contacts are provided by residues aspartate 14–threonine 19 and asparagine 131–aspartate 134.

Belongs to the TRAFAC class translation factor GTPase superfamily. Classic translation factor GTPase family. LepA subfamily.

The protein localises to the cell inner membrane. It catalyses the reaction GTP + H2O = GDP + phosphate + H(+). Functionally, required for accurate and efficient protein synthesis under certain stress conditions. May act as a fidelity factor of the translation reaction, by catalyzing a one-codon backward translocation of tRNAs on improperly translocated ribosomes. Back-translocation proceeds from a post-translocation (POST) complex to a pre-translocation (PRE) complex, thus giving elongation factor G a second chance to translocate the tRNAs correctly. Binds to ribosomes in a GTP-dependent manner. The protein is Elongation factor 4 of Proteus mirabilis (strain HI4320).